Consider the following 1004-residue polypeptide: Copper-transporting ATPase (1004 aa).

The Cytoplasmic portion of the chain corresponds to 1 to 262 (MREVILAVHG…FWKKNSIKST (262 aa)). HMA domains are found at residues 2–67 (REVI…FDCE) and 80–146 (KEGL…FDSN). Cu(+) contacts are provided by Cys-13, Cys-16, Cys-91, and Cys-94. Residues 263 to 283 (LLAIICMLLYMIVPMMWPTIV) form a helical membrane-spanning segment. At 284-303 (QDRIFPYKETSFVRGLFYRD) the chain is on the lumenal, vesicle side. The chain crosses the membrane as a helical span at residues 304 to 324 (ILGVILASYIQFSVGFYFYKA). Residues 325 to 335 (AWASLKHGSGT) lie on the Cytoplasmic side of the membrane. The helical transmembrane segment at 336–356 (MDTLVCVSTTCAYTFSVFSLV) threads the bilayer. The Lumenal, vesicle segment spans residues 357–370 (HNMFHPSSTGKLPR). The helical transmembrane segment at 371 to 391 (IVFDTSIMIISYISIGKYLET) threads the bilayer. Residues 392–528 (LAKSQTSTAL…IQGYADYLAS (137 aa)) are Cytoplasmic-facing. The chain crosses the membrane as a helical span at residues 529 to 549 (IFVPGILILAVLTFFIWCFIL). Residues 550 to 577 (NISANPPVAFTANTKADNFFICLQTATS) lie on the Lumenal, vesicle side of the membrane. A helical transmembrane segment spans residues 578–598 (VVIVACPCALGLATPTAIMVG). Over 599 to 901 (TGVGAQNGVL…LKTFKRIKLN (303 aa)) the chain is Cytoplasmic. Residue Asp-627 is the 4-aspartylphosphate intermediate of the active site. Mg(2+)-binding residues include Asp-838 and Asp-842. A helical membrane pass occupies residues 902–924 (LFWALCYNIFMIPIAMGVLIPWG). Residues 925-927 (ITL) are Lumenal, vesicle-facing. The helical transmembrane segment at 928–950 (PPMLAGLAMAFSSVSVVLSSLML) threads the bilayer. The Cytoplasmic portion of the chain corresponds to 951 to 1004 (KKWTPPDIESHGISDFKSKFSIGNFWSRLFSTRAIAGEQDIESQAGLMSNEEVL).

Belongs to the cation transport ATPase (P-type) (TC 3.A.3) family. Type IB subfamily. As to quaternary structure, interacts with the copper chaperone ATX1 via the copper anion.

It localises to the golgi apparatus. The protein localises to the trans-Golgi network membrane. It carries out the reaction Cu(+)(in) + ATP + H2O = Cu(+)(out) + ADP + phosphate + H(+). Functionally, copper-transporting P-type ATPase necessary for the proper uptake of iron. Required for export of copper from cytosol into extracytosolic compartment. Retrieves copper from the metallochaperone ATX1 and incorporates it into trans-Golgi vesicles where they are acquired by the cell-surface iron transporter FET3. Required the production of inositolphosphorylceramide D, probably by delivering copper to a yet to be identified enzyme. The protein is Copper-transporting ATPase of Saccharomyces cerevisiae (strain ATCC 204508 / S288c) (Baker's yeast).